A 147-amino-acid polypeptide reads, in one-letter code: D-aminoacyl-tRNA deacylase (147 aa).

The Gly-cisPro motif, important for rejection of L-amino acids motif lies at 136-137 (GP).

The protein belongs to the DTD family. As to quaternary structure, homodimer.

The protein resides in the cytoplasm. The catalysed reaction is glycyl-tRNA(Ala) + H2O = tRNA(Ala) + glycine + H(+). It catalyses the reaction a D-aminoacyl-tRNA + H2O = a tRNA + a D-alpha-amino acid + H(+). In terms of biological role, an aminoacyl-tRNA editing enzyme that deacylates mischarged D-aminoacyl-tRNAs. Also deacylates mischarged glycyl-tRNA(Ala), protecting cells against glycine mischarging by AlaRS. Acts via tRNA-based rather than protein-based catalysis; rejects L-amino acids rather than detecting D-amino acids in the active site. By recycling D-aminoacyl-tRNA to D-amino acids and free tRNA molecules, this enzyme counteracts the toxicity associated with the formation of D-aminoacyl-tRNA entities in vivo and helps enforce protein L-homochirality. This Streptococcus equi subsp. zooepidemicus (strain MGCS10565) protein is D-aminoacyl-tRNA deacylase.